A 66-amino-acid polypeptide reads, in one-letter code: U1-theraphotoxin-Cg1a 1 (66 aa).

The N-terminal stretch at 1–21 (MKTSALFVIFGLVLLFCNSFA) is a signal peptide. A propeptide spanning residues 22–29 (AELKTTGR) is cleaved from the precursor. Cystine bridges form between cysteine 31–cysteine 46, cysteine 38–cysteine 51, and cysteine 45–cysteine 58. Proline amide is present on proline 63.

This sequence belongs to the neurotoxin 10 (Hwtx-1) family. 46 (Jztx-7/10/12) subfamily. As to expression, expressed by the venom gland.

The protein localises to the secreted. In terms of biological role, probable ion channel inhibitor. This Chilobrachys guangxiensis (Chinese earth tiger tarantula) protein is U1-theraphotoxin-Cg1a 1.